The primary structure comprises 392 residues: S-adenosylmethionine synthase (392 aa).

His17 is a binding site for ATP. Residue Asp19 coordinates Mg(2+). Glu45 is a K(+) binding site. L-methionine is bound by residues Glu58 and Gln102. Residues 102 to 112 (QSADIAQGVDA) form a flexible loop region. Residues 169–171 (DAK), 235–236 (KF), Asp244, 250–251 (RK), Ala267, and Lys271 contribute to the ATP site. Position 244 (Asp244) interacts with L-methionine. Lys275 is an L-methionine binding site.

Belongs to the AdoMet synthase family. In terms of assembly, homotetramer; dimer of dimers. Mg(2+) is required as a cofactor. The cofactor is K(+).

Its subcellular location is the cytoplasm. The catalysed reaction is L-methionine + ATP + H2O = S-adenosyl-L-methionine + phosphate + diphosphate. The protein operates within amino-acid biosynthesis; S-adenosyl-L-methionine biosynthesis; S-adenosyl-L-methionine from L-methionine: step 1/1. Catalyzes the formation of S-adenosylmethionine (AdoMet) from methionine and ATP. The overall synthetic reaction is composed of two sequential steps, AdoMet formation and the subsequent tripolyphosphate hydrolysis which occurs prior to release of AdoMet from the enzyme. The sequence is that of S-adenosylmethionine synthase from Methylobacterium nodulans (strain LMG 21967 / CNCM I-2342 / ORS 2060).